The primary structure comprises 101 residues: Conantokin-L (101 aa).

An N-terminal signal peptide occupies residues 1-21 (MQLYTYLYLLVPLVTFHLILG). Positions 22-80 (TGTLDHGGALTERRSTDAIALKPEPVLLQKSSARSTDDNGNDRLTQMKRILKKRGNKAR) are excised as a propeptide. A 4-carboxyglutamate mark is found at Glu-83, Glu-84, Glu-91, and Glu-95. The a divalent metal cation site is built by Glu-91 and Glu-95. At Asn-99 the chain carries Asparagine amide.

It belongs to the conotoxin B superfamily. Ca(2+) is required as a cofactor. Mg(2+) serves as cofactor. In terms of tissue distribution, expressed by the venom duct.

Its subcellular location is the secreted. In terms of biological role, conantokins inhibit N-methyl-D-aspartate (NMDA) receptors. This toxin is far less potent as an anticonvulsant compound than conantokin-R. It induces sleep-like symptoms in mice. This chain is Conantokin-L, found in Conus lynceus (Lynceus cone).